The primary structure comprises 166 residues: Signal peptidase complex catalytic subunit SEC11 (166 aa).

At 1–9 the chain is on the cytoplasmic side; the sequence is MNIRQQITQ. Residues 10–30 traverse the membrane as a helical; Signal-anchor for type II membrane protein segment; that stretch reads FLSLAYVFSSAFMLWKTLSVI. Topologically, residues 31 to 166 are lumenal; sequence ANSHSPIVVV…LGLSSLFSNE (136 aa). Catalysis depends on charge relay system residues S44, H83, and D108. The C-terminal short (CTS) helix stretch occupies residues 152-163; sequence GMLGLLGLSSLF.

The protein belongs to the peptidase S26B family. Component of the signal peptidase complex (SPC) composed of a catalytic subunit SEC11 and three accessory subunits SPC1, SPC2 and SPC3. The complex induces a local thinning of the ER membrane which is used to measure the length of the signal peptide (SP) h-region of protein substrates. This ensures the selectivity of the complex towards h-regions shorter than 18-20 amino acids. SPC associates with the translocon complex.

The protein localises to the endoplasmic reticulum membrane. It carries out the reaction Cleavage of hydrophobic, N-terminal signal or leader sequences from secreted and periplasmic proteins.. Functionally, catalytic component of the signal peptidase complex (SPC) which catalyzes the cleavage of N-terminal signal sequences from nascent proteins as they are translocated into the lumen of the endoplasmic reticulum. Specifically cleaves N-terminal signal peptides that contain a hydrophobic alpha-helix (h-region) shorter than 18-20 amino acids. This is Signal peptidase complex catalytic subunit SEC11 (SEC11) from Candida dubliniensis (strain CD36 / ATCC MYA-646 / CBS 7987 / NCPF 3949 / NRRL Y-17841) (Yeast).